A 1579-amino-acid chain; its full sequence is Eukaryotic translation initiation factor 4 gamma 3 (1579 aa).

2 disordered regions span residues 1–35 (MNSQ…RPGV) and 128–326 (TQQQ…GPSL). Residues 10-25 (PFFQRPQIQPPRAAIP) show a composition bias toward low complexity. Positions 26-35 (NSSPSIRPGV) are enriched in polar residues. The segment at 134 to 162 (PAKREKKTIRIRDPNQGGKDITEEIMSGG) is PABPC1-binding. Pro residues predominate over residues 167–183 (PTPPIGRPASTPTPPQQ). Threonine 168 bears the Phosphothreonine mark. Phosphoserine is present on residues serine 230, serine 232, and serine 267. The span at 266 to 292 (SSPTSLPPLARSSLPSPMSAALSSQPL) shows a compositional bias: low complexity. Residues 295-308 (AEDKCELPSSKEED) are compositionally biased toward basic and acidic residues. The span at 315–326 (PTSCTAASGPSL) shows a compositional bias: polar residues. 4 positions are modified to phosphoserine: serine 436, serine 470, serine 472, and serine 490. Over residues 454–470 (RTCLSKDAKEMQDKAES) the composition is skewed to basic and acidic residues. 3 disordered regions span residues 454–615 (RTCL…DTEG), 681–706 (RQTP…QRRE), and 724–744 (AENA…PESI). The segment covering 471 to 480 (ESDGQAEETA) has biased composition (acidic residues). Residues 481-501 (DPQSLHSGRSPAPVQTATTAP) are compositionally biased toward polar residues. Composition is skewed to basic and acidic residues over residues 506–515 (KTKEQTRTPD) and 549–563 (SERD…KAEE). A compositionally biased stretch (low complexity) spans 589–598 (SGSADSSADG). The span at 606–615 (ESWKPADTEG) shows a compositional bias: basic and acidic residues. Positions 614-625 (EGKKQYDREFLL) are EIF4E-binding. Positions 694–1014 (VGPRRSQPGQ…EQRKVQQLMT (321 aa)) are eIF3/EIF4A-binding. 5 HEAT repeats span residues 740–778 (DPES…LTVD), 779–826 (TEER…GNTV), 827–900 (NFRK…LKML), 901–939 (TEAI…DFEK), and 940–979 (AKPR…LCNW). The 229-residue stretch at 750 to 978 (FRKVRSILNK…QDVIDLRLCN (229 aa)) folds into the MIF4G domain. Residues 855–871 (KELEAASAPEERTRLHD) show a composition bias toward basic and acidic residues. The disordered stretch occupies residues 855–875 (KELEAASAPEERTRLHDELEE). The stretch at 989 to 1018 (KTIEQIHKEAKIEEQEEQRKVQQLMTKEKR) forms a coiled coil. Disordered regions lie at residues 1009 to 1037 (VQQL…QGAK) and 1067 to 1214 (LGSW…LSEE). The span at 1086 to 1098 (LRSSASSLNRFSP) shows a compositional bias: low complexity. Phosphoserine; by CaMK1 is present on serine 1150. Basic and acidic residues-rich tracts occupy residues 1150-1169 (SSKD…EMLE) and 1179-1197 (DAER…ELAK). Positions 1154–1176 (LLDNQSQEEQRREMLETVKQLTG) form a coiled coil. Serine 1212 is subject to Phosphoserine. Positions 1215-1337 (EVERKSKSII…SMRELIVEFS (123 aa)) constitute an MI domain. The stretch at 1406–1438 (SSEALSKKELSAEELSQRLEKLIMEEKADDERI) forms a coiled coil. The W2 domain maps to 1410–1579 (LSKKELSAEE…REAEEESEDN (170 aa)). The segment at 1427–1579 (LIMEEKADDE…REAEEESEDN (153 aa)) is EIF4A-binding. The interval 1565–1579 (FFTWLREAEEESEDN) is necessary but not sufficient for MKNK1-binding.

This sequence belongs to the eukaryotic initiation factor 4G family. In terms of assembly, interacts with EIF4A, EIF4E, eIF3 and PABPC1. Part of a complex with EIF4E. eIF4F is a multi-subunit complex, the composition of which varies with external and internal environmental conditions. It is composed of at least EIF4A, EIF4E and EIF4G1/EIF4G3. EIF4G1/EIF4G3 interacts through its C-terminus with the serine/threonine kinases MKNK1, and with MKNK2. Appears to act as a scaffold protein, holding these enzymes in place to phosphorylate eIF4E. Non-phosphorylated EIF4EBP1 competes with EIF4G1/EIFG3 to interact with EIF4E; insulin stimulated MAP-kinase (MAPK1 and MAPK3) phosphorylation of EIF4EBP1 causes dissociation of the complex allowing EIF4G1/EIF4G3 to bind and consequent initiation of translation. EIF4G1/EIF4G3 interacts with PABPC1 to bring about circularization of the mRNA. Interacts with FXR1; promoting translation of FXR1 target mRNAs.

Functionally, component of the protein complex eIF4F, which is involved in the recognition of the mRNA cap, ATP-dependent unwinding of 5'-terminal secondary structure and recruitment of mRNA to the ribosome. Functional homolog of EIF4G1. This Mus musculus (Mouse) protein is Eukaryotic translation initiation factor 4 gamma 3 (Eif4g3).